Consider the following 102-residue polypeptide: Small ribosomal subunit protein uS10 (102 aa).

Belongs to the universal ribosomal protein uS10 family. Part of the 30S ribosomal subunit.

In terms of biological role, involved in the binding of tRNA to the ribosomes. This Staphylococcus aureus (strain Mu3 / ATCC 700698) protein is Small ribosomal subunit protein uS10.